The chain runs to 514 residues: Peptide chain release factor 3 (514 aa).

The region spanning 8–268 (KKRRTFAIIS…TFLEFAPEPH (261 aa)) is the tr-type G domain. GTP contacts are provided by residues 17 to 24 (SHPDAGKT), 85 to 89 (DTPGH), and 139 to 142 (NKLD).

It belongs to the TRAFAC class translation factor GTPase superfamily. Classic translation factor GTPase family. PrfC subfamily.

It is found in the cytoplasm. In terms of biological role, increases the formation of ribosomal termination complexes and stimulates activities of RF-1 and RF-2. It binds guanine nucleotides and has strong preference for UGA stop codons. It may interact directly with the ribosome. The stimulation of RF-1 and RF-2 is significantly reduced by GTP and GDP, but not by GMP. The sequence is that of Peptide chain release factor 3 from Streptococcus uberis (strain ATCC BAA-854 / 0140J).